The sequence spans 361 residues: Hydroxycarboxylate dehydrogenase B (361 aa).

Residues His48, 122-124, 178-182, His234, Asn270, and 313-316 contribute to the NAD(+) site; these read GRI, LLDYA, and GEWE.

The protein belongs to the LDH2/MDH2 oxidoreductase family.

The catalysed reaction is 2-hydroxyglutarate + NADP(+) = 2-oxoglutarate + NADPH + H(+). It carries out the reaction 2-hydroxyglutarate + NAD(+) = 2-oxoglutarate + NADH + H(+). It catalyses the reaction 3-phenyllactate + NADP(+) = 3-phenylpyruvate + NADPH + H(+). The enzyme catalyses 3-phenyllactate + NAD(+) = 3-phenylpyruvate + NADH + H(+). The catalysed reaction is (2R)-2-hydroxy-3-(4-hydroxyphenyl)propanoate + NAD(+) = 3-(4-hydroxyphenyl)pyruvate + NADH + H(+). It carries out the reaction (2R)-2-hydroxy-3-(4-hydroxyphenyl)propanoate + NADP(+) = 3-(4-hydroxyphenyl)pyruvate + NADPH + H(+). It catalyses the reaction (2R)-3-(3,4-dihydroxyphenyl)lactate + NADP(+) = 3-(3,4-dihydroxyphenyl)pyruvate + NADPH + H(+). The enzyme catalyses (2R)-3-(3,4-dihydroxyphenyl)lactate + NAD(+) = 3-(3,4-dihydroxyphenyl)pyruvate + NADH + H(+). In terms of biological role, catalyzes the NAD(P)H-dependent reduction of 2-oxoglutarate, phenylpyruvate and (4-hydroxyphenyl)pyruvate, leading to the respective 2-hydroxycarboxylate in vitro. Shows a preference for NADPH over NADH as a redox partner. Do not catalyze the reverse reactions. This Escherichia coli O157:H7 protein is Hydroxycarboxylate dehydrogenase B.